Here is a 63-residue protein sequence, read N- to C-terminus: Large ribosomal subunit protein bL28 (63 aa).

It belongs to the bacterial ribosomal protein bL28 family.

This Desulfitobacterium hafniense (strain DSM 10664 / DCB-2) protein is Large ribosomal subunit protein bL28.